The sequence spans 395 residues: S-adenosylmethionine synthase (395 aa).

Histidine 16 provides a ligand contact to ATP. Aspartate 18 contacts Mg(2+). Residue glutamate 44 participates in K(+) binding. Residues glutamate 57 and glutamine 100 each contribute to the L-methionine site. Residues 100-110 (QSPDIAQGVDR) are flexible loop. ATP is bound by residues 167–169 (DAK), 233–234 (RF), aspartate 242, 248–249 (RK), alanine 265, and lysine 269. Aspartate 242 lines the L-methionine pocket. Lysine 273 is a binding site for L-methionine.

It belongs to the AdoMet synthase family. As to quaternary structure, homotetramer; dimer of dimers. Mg(2+) is required as a cofactor. It depends on K(+) as a cofactor.

The protein resides in the cytoplasm. The catalysed reaction is L-methionine + ATP + H2O = S-adenosyl-L-methionine + phosphate + diphosphate. The protein operates within amino-acid biosynthesis; S-adenosyl-L-methionine biosynthesis; S-adenosyl-L-methionine from L-methionine: step 1/1. Its function is as follows. Catalyzes the formation of S-adenosylmethionine (AdoMet) from methionine and ATP. The overall synthetic reaction is composed of two sequential steps, AdoMet formation and the subsequent tripolyphosphate hydrolysis which occurs prior to release of AdoMet from the enzyme. The sequence is that of S-adenosylmethionine synthase from Paraburkholderia phymatum (strain DSM 17167 / CIP 108236 / LMG 21445 / STM815) (Burkholderia phymatum).